The following is a 223-amino-acid chain: Endo-1,4-beta-xylanase 2 (223 aa).

An N-terminal signal peptide occupies residues 1–19; the sequence is MVSFTSLLAGVAAISGVLA. Positions 20 to 33 are excised as a propeptide; that stretch reads APAAEVESVAVEKR. Gln34 carries the post-translational modification Pyrrolidone carboxylic acid. The region spanning 34–222 is the GH11 domain; sequence QTIQPGTGYN…FSSGSASITV (189 aa). Residues Asn71 and Asn94 are each glycosylated (N-linked (GlcNAc...) asparagine). Substrate contacts are provided by Tyr106 and Tyr110. Residue Glu119 is the Nucleophile of the active site. Residues Tyr121, Arg155, Pro159, Gln169, and Tyr204 each coordinate substrate. Residue Glu210 is the Proton donor of the active site.

The protein belongs to the glycosyl hydrolase 11 (cellulase G) family.

Its subcellular location is the secreted. It carries out the reaction Endohydrolysis of (1-&gt;4)-beta-D-xylosidic linkages in xylans.. Its pathway is glycan degradation; xylan degradation. Functionally, glycoside hydrolase involved in the hydrolysis of xylan, a major plant cell wall hemicellulose made up of 1,4-beta-linked D-xylopyranose residues. Catalyzes the endohydrolysis of the main-chain 1,4-beta-glycosidic bonds connecting the xylose subunits yielding various xylooligosaccharides and xylose. The catalysis proceeds by a double-displacement reaction mechanism with a putative covalent glycosyl-enzyme intermediate, with retention of the anomeric configuration. Produces xylobiose and xylose as the main degradation products. This Hypocrea jecorina (strain ATCC 56765 / BCRC 32924 / NRRL 11460 / Rut C-30) (Trichoderma reesei) protein is Endo-1,4-beta-xylanase 2.